We begin with the raw amino-acid sequence, 72 residues long: uncharacterized protein (72 aa).

The interval 51–72 (AKGGRQKGEVVGVDDQCKEHKE) is disordered.

It belongs to the YiiE family.

This is an uncharacterized protein from Escherichia coli O157:H7.